We begin with the raw amino-acid sequence, 75 residues long: Metallothionein-like protein 1 (75 aa).

The protein belongs to the metallothionein superfamily. Type 15 family.

Metallothioneins have a high content of cysteine residues that bind various heavy metals. The polypeptide is Metallothionein-like protein 1 (MT1B) (Trifolium repens (Creeping white clover)).